A 295-amino-acid chain; its full sequence is Adrenocorticotropic hormone receptor (295 aa).

Residues 1-23 (MRHILNLYENINSTARNNSDCPA) lie on the Extracellular side of the membrane. Asn12 and Asn17 each carry an N-linked (GlcNAc...) asparagine glycan. Disulfide bonds link Cys21–Cys253 and Cys245–Cys251. A helical transmembrane segment spans residues 24–49 (VILPEEIFFTVSIVGVLENLMVLLAV). Over 50–58 (AKNKSLQSP) the chain is Cytoplasmic. Residues 59–79 (MYFFICSLAISDMLGSLYKIL) form a helical membrane-spanning segment. At 80–104 (ENVLIMFRNMGYLEPRGSFESTADD) the chain is on the extracellular side. A helical membrane pass occupies residues 105-126 (VVDSLFILSLLGSICSLSVIAA). The Cytoplasmic portion of the chain corresponds to 127–147 (DRYITIFHALQYHSIVTMHRA). A helical transmembrane segment spans residues 148–168 (LVVLTVLWAGCTGSGITIVTF). Residues 169 to 180 (SHHVPTVIAFTA) are Extracellular-facing. Residues 181–199 (LFPLMLAFILCLYVHMFLL) traverse the membrane as a helical segment. Residues 200–217 (ARSHARRTSSLPKANMRG) are Cytoplasmic-facing. A helical membrane pass occupies residues 218-244 (AITLTVLLGVFIFCWAPFVLHVLLMTF). Topologically, residues 245–256 (CPADPYCACYMS) are extracellular. Residues 257–278 (LFQVNGVLIMCNAVIDPFIYAF) form a helical membrane-spanning segment. The Cytoplasmic portion of the chain corresponds to 279-295 (RSPELRVAFKKMVICNW). Cys293 carries the S-palmitoyl cysteine lipid modification.

The protein belongs to the G-protein coupled receptor 1 family. In terms of assembly, homodimer. Interacts with corticotropin (ACTH). Interacts with MRAP; this interaction targets MC2R to the plasma membrane. Interacts with MRAP2; competing with MRAP for binding to MC2R and impairing the binding of corticotropin (ACTH). Ubiquitinated by MGRN1 that may be involved in post-endocytic trafficking and/or degradation of internalized receptor.

It localises to the cell membrane. In terms of biological role, hormone receptor primarily expressed in adrenal cortex that plays a key role in regulating adrenocortical function. Upon corticotropin (ACTH) binding, facilitates the release of adrenal glucocorticoids, including cortisol and corticosterone. In addition, MC2R is required for fetal and neonatal adrenal gland development. Mechanistically, activates adenylate cyclase (cAMP), the MAPK cascade as well as the cAMP-dependent protein kinase A pathway leading to steroidogenic factor 1/NR5A1-mediated transcriptional activation. This chain is Adrenocorticotropic hormone receptor (MC2R), found in Ovis aries (Sheep).